We begin with the raw amino-acid sequence, 68 residues long: DNA-directed RNA polymerase subunit omega (68 aa).

It belongs to the RNA polymerase subunit omega family. The RNAP catalytic core consists of 2 alpha, 1 beta, 1 beta' and 1 omega subunit. When a sigma factor is associated with the core the holoenzyme is formed, which can initiate transcription.

The catalysed reaction is RNA(n) + a ribonucleoside 5'-triphosphate = RNA(n+1) + diphosphate. In terms of biological role, promotes RNA polymerase assembly. Latches the N- and C-terminal regions of the beta' subunit thereby facilitating its interaction with the beta and alpha subunits. The chain is DNA-directed RNA polymerase subunit omega from Trichlorobacter lovleyi (strain ATCC BAA-1151 / DSM 17278 / SZ) (Geobacter lovleyi).